A 370-amino-acid polypeptide reads, in one-letter code: UDP-N-acetylglucosamine--N-acetylmuramyl-(pentapeptide) pyrophosphoryl-undecaprenol N-acetylglucosamine transferase (370 aa).

Residues 10-12, Asn126, Ser200, Ile255, and Gln300 contribute to the UDP-N-acetyl-alpha-D-glucosamine site; that span reads TGG.

Belongs to the glycosyltransferase 28 family. MurG subfamily.

The protein resides in the cell membrane. It catalyses the reaction Mur2Ac(oyl-L-Ala-gamma-D-Glu-L-Lys-D-Ala-D-Ala)-di-trans,octa-cis-undecaprenyl diphosphate + UDP-N-acetyl-alpha-D-glucosamine = beta-D-GlcNAc-(1-&gt;4)-Mur2Ac(oyl-L-Ala-gamma-D-Glu-L-Lys-D-Ala-D-Ala)-di-trans,octa-cis-undecaprenyl diphosphate + UDP + H(+). The protein operates within cell wall biogenesis; peptidoglycan biosynthesis. Cell wall formation. Catalyzes the transfer of a GlcNAc subunit on undecaprenyl-pyrophosphoryl-MurNAc-pentapeptide (lipid intermediate I) to form undecaprenyl-pyrophosphoryl-MurNAc-(pentapeptide)GlcNAc (lipid intermediate II). The chain is UDP-N-acetylglucosamine--N-acetylmuramyl-(pentapeptide) pyrophosphoryl-undecaprenol N-acetylglucosamine transferase from Lactobacillus johnsonii (strain CNCM I-12250 / La1 / NCC 533).